The following is an 888-amino-acid chain: uncharacterized protein (888 aa).

The N-terminal stretch at 1–20 is a signal peptide; it reads MKILKSLVLLVLFIVMPAKA. The next 6 membrane-spanning stretches (helical) occupy residues 513–533, 565–585, 611–631, 649–669, 682–702, and 781–801; these read IVKA…VAGA, TYFF…VVGA, LLFI…IITI, VIAF…IILM, ISTL…FLLI, and LLFY…NIVV.

The protein belongs to the TrbL/VirB6 family.

The protein resides in the cell membrane. This is an uncharacterized protein from Rickettsia prowazekii (strain Madrid E).